The chain runs to 789 residues: Cadherin-10 (789 aa).

An N-terminal signal peptide occupies residues 1-22 (MTIQQVLLLLLLWMWLLHPCRT). Residues 23 to 54 (EMLFRRTPDLRPKGFVGRTSGSDGKALHRQKR) constitute a propeptide that is removed on maturation. Cadherin domains lie at 55–160 (GWMW…EPTF), 161–269 (PEEI…PPRF), 270–384 (PQST…PPVF), 385–487 (SRSS…DNAP), and 488–606 (QFAV…LLLP). Over 55-606 (GWMWNQFFLL…SCNAEALLLP (552 aa)) the chain is Extracellular. A glycan (N-linked (GlcNAc...) asparagine) is linked at N256. N-linked (GlcNAc...) asparagine glycans are attached at residues N438, N456, and N534. The helical transmembrane segment at 607-634 (AGLSTGALIAILLCIIILLVIVVLFAAL) threads the bilayer. Residues 635–789 (KRQRKKEPLI…GGGESDKDAS (155 aa)) lie on the Cytoplasmic side of the membrane.

The protein localises to the cell membrane. Its function is as follows. Cadherins are calcium-dependent cell adhesion proteins. They preferentially interact with themselves in a homophilic manner in connecting cells; cadherins may thus contribute to the sorting of heterogeneous cell types. This chain is Cadherin-10 (CDH10), found in Gallus gallus (Chicken).